The following is a 217-amino-acid chain: Guanylate kinase (217 aa).

Residues 1–10 (MAVSSTTLSS) show a composition bias toward low complexity. Positions 1 to 30 (MAVSSTTLSSPTPPECLQQQEAPRPPATRG) are disordered. The Guanylate kinase-like domain maps to 30–208 (GRLVVLTGPS…ALQELEALLY (179 aa)). 37–44 (GPSGVGKG) contacts ATP.

Belongs to the guanylate kinase family.

It is found in the cytoplasm. The enzyme catalyses GMP + ATP = GDP + ADP. The catalysed reaction is dZMP + ATP = dZDP + ADP. It functions in the pathway purine metabolism. Functionally, essential for recycling GMP and indirectly, cGMP. In terms of biological role, (Microbial infection) Catalyzes the phosphorylation of dZMP to dZDP, when the bacterium is infected by a phage that produces the substrate for the synthesis of dZTP (2- amino-2'-deoxyadenosine 5'-triphosphate), which is then used by the phage as a DNA polymerase substrate. The chain is Guanylate kinase from Synechococcus sp. (strain JA-3-3Ab) (Cyanobacteria bacterium Yellowstone A-Prime).